The following is an 80-amino-acid chain: MSQEEILQKVCSIVSEQLSVESAEVKSDSNFQNDLGADSLDTVELVMALEEAFDIEIPDEAAEGIATVGDAVKFIEEKKG.

A Carrier domain is found at E4–K79. An O-(pantetheine 4'-phosphoryl)serine modification is found at S39.

It belongs to the acyl carrier protein (ACP) family. In terms of processing, 4'-phosphopantetheine is transferred from CoA to a specific serine of apo-ACP by AcpS. This modification is essential for activity because fatty acids are bound in thioester linkage to the sulfhydryl of the prosthetic group.

It is found in the cytoplasm. The protein operates within lipid metabolism; fatty acid biosynthesis. Carrier of the growing fatty acid chain in fatty acid biosynthesis. In Prochlorococcus marinus subsp. pastoris (strain CCMP1986 / NIES-2087 / MED4), this protein is Acyl carrier protein.